Here is a 1059-residue protein sequence, read N- to C-terminus: IQ motif-containing protein H (1059 aa).

Positions 6–35 (KNKDEVGNILVKVQDDLRQLKKNIVQFTVQ) form a coiled coil. The segment at 245-267 (MESAESRLLRAPPPSAASASSDN) is disordered. The region spanning 401 to 430 (HQAAAVRIQTCWRRYSARTAYLIRLRSKWA) is the IQ domain.

This Danio rerio (Zebrafish) protein is IQ motif-containing protein H (iqch).